The following is a 232-amino-acid chain: Chaperone protein CssC (232 aa).

The signal sequence occupies residues 1–20 (MKSKLIILLMLVPFSSFSTE).

The protein belongs to the periplasmic pilus chaperone family.

The protein resides in the periplasm. Involved in the biogenesis of the CS6 fimbria. In Escherichia coli, this protein is Chaperone protein CssC (cssC).